A 365-amino-acid polypeptide reads, in one-letter code: Phosphoserine aminotransferase (365 aa).

Arg-42 contributes to the L-glutamate binding site. Pyridoxal 5'-phosphate contacts are provided by residues 76 to 77, Trp-103, Thr-154, Asp-175, and Gln-198; that span reads AR. Lys-199 carries the N6-(pyridoxal phosphate)lysine modification. 242–243 serves as a coordination point for pyridoxal 5'-phosphate; it reads NT.

The protein belongs to the class-V pyridoxal-phosphate-dependent aminotransferase family. SerC subfamily. As to quaternary structure, homodimer. Pyridoxal 5'-phosphate serves as cofactor.

The protein localises to the cytoplasm. The enzyme catalyses O-phospho-L-serine + 2-oxoglutarate = 3-phosphooxypyruvate + L-glutamate. The catalysed reaction is 4-(phosphooxy)-L-threonine + 2-oxoglutarate = (R)-3-hydroxy-2-oxo-4-phosphooxybutanoate + L-glutamate. It functions in the pathway amino-acid biosynthesis; L-serine biosynthesis; L-serine from 3-phospho-D-glycerate: step 2/3. The protein operates within cofactor biosynthesis; pyridoxine 5'-phosphate biosynthesis; pyridoxine 5'-phosphate from D-erythrose 4-phosphate: step 3/5. In terms of biological role, catalyzes the reversible conversion of 3-phosphohydroxypyruvate to phosphoserine and of 3-hydroxy-2-oxo-4-phosphonooxybutanoate to phosphohydroxythreonine. This Blochmanniella floridana protein is Phosphoserine aminotransferase.